The chain runs to 438 residues: Serine--tRNA ligase (438 aa).

243 to 245 lines the L-serine pocket; sequence TAE. Residue 274 to 276 participates in ATP binding; that stretch reads RSE. Glu-297 is a binding site for L-serine. 361–364 lines the ATP pocket; sequence EISS. Ser-396 contacts L-serine.

This sequence belongs to the class-II aminoacyl-tRNA synthetase family. Type-1 seryl-tRNA synthetase subfamily. Homodimer. The tRNA molecule binds across the dimer.

It is found in the cytoplasm. It carries out the reaction tRNA(Ser) + L-serine + ATP = L-seryl-tRNA(Ser) + AMP + diphosphate + H(+). The catalysed reaction is tRNA(Sec) + L-serine + ATP = L-seryl-tRNA(Sec) + AMP + diphosphate + H(+). It functions in the pathway aminoacyl-tRNA biosynthesis; selenocysteinyl-tRNA(Sec) biosynthesis; L-seryl-tRNA(Sec) from L-serine and tRNA(Sec): step 1/1. Functionally, catalyzes the attachment of serine to tRNA(Ser). Is also able to aminoacylate tRNA(Sec) with serine, to form the misacylated tRNA L-seryl-tRNA(Sec), which will be further converted into selenocysteinyl-tRNA(Sec). In Ralstonia pickettii (strain 12J), this protein is Serine--tRNA ligase.